We begin with the raw amino-acid sequence, 117 residues long: Large ribosomal subunit protein bL20c (117 aa).

It belongs to the bacterial ribosomal protein bL20 family.

Its subcellular location is the plastid. The protein resides in the chloroplast. Its function is as follows. Binds directly to 23S ribosomal RNA and is necessary for the in vitro assembly process of the 50S ribosomal subunit. It is not involved in the protein synthesizing functions of that subunit. The protein is Large ribosomal subunit protein bL20c of Drimys granadensis.